The chain runs to 415 residues: Levansucrase LscA (415 aa).

5 residues coordinate sucrose: Trp-45, Asp-46, Ala-132, Arg-202, and Asp-203. Catalysis depends on Asp-46, which acts as the Nucleophile. Glu-287 functions as the Proton donor/acceptor in the catalytic mechanism.

This sequence belongs to the glycosyl hydrolase 68 family.

Its subcellular location is the periplasm. The catalysed reaction is [6)-beta-D-fructofuranosyl-(2-&gt;](n) alpha-D-glucopyranoside + sucrose = [6)-beta-D-fructofuranosyl-(2-&gt;](n+1) alpha-D-glucopyranoside + D-glucose. In terms of biological role, catalyzes the synthesis of levan, a fructose polymer, by transferring the fructosyl moiety from sucrose to a growing acceptor molecule. LscA encodes a functional enzyme in vitro, when expressed in E.coli under control of the vector-based lactose promoter (Plac), and it can restore levan production to the lscB-lscC double mutant. However, lscA is not expressed in P.savastanoi pv. glycinea PG4180 under standard conditions. It could be an ancestral Lsc variant in P.syringae. In Pseudomonas savastanoi pv. glycinea (Pseudomonas syringae pv. glycinea), this protein is Levansucrase LscA.